A 100-amino-acid polypeptide reads, in one-letter code: Aspartyl/glutamyl-tRNA(Asn/Gln) amidotransferase subunit C (100 aa).

This sequence belongs to the GatC family. Heterotrimer of A, B and C subunits.

It carries out the reaction L-glutamyl-tRNA(Gln) + L-glutamine + ATP + H2O = L-glutaminyl-tRNA(Gln) + L-glutamate + ADP + phosphate + H(+). The catalysed reaction is L-aspartyl-tRNA(Asn) + L-glutamine + ATP + H2O = L-asparaginyl-tRNA(Asn) + L-glutamate + ADP + phosphate + 2 H(+). Its function is as follows. Allows the formation of correctly charged Asn-tRNA(Asn) or Gln-tRNA(Gln) through the transamidation of misacylated Asp-tRNA(Asn) or Glu-tRNA(Gln) in organisms which lack either or both of asparaginyl-tRNA or glutaminyl-tRNA synthetases. The reaction takes place in the presence of glutamine and ATP through an activated phospho-Asp-tRNA(Asn) or phospho-Glu-tRNA(Gln). The chain is Aspartyl/glutamyl-tRNA(Asn/Gln) amidotransferase subunit C from Streptococcus thermophilus (strain ATCC BAA-491 / LMD-9).